The sequence spans 248 residues: Triosephosphate isomerase (248 aa).

Residue 9-11 participates in substrate binding; that stretch reads NWK. His-94 functions as the Electrophile in the catalytic mechanism. The Proton acceptor role is filled by Glu-166. Residues Gly-172, Ser-212, and 233-234 contribute to the substrate site; that span reads GG.

It belongs to the triosephosphate isomerase family. In terms of assembly, homodimer.

It localises to the cytoplasm. It catalyses the reaction D-glyceraldehyde 3-phosphate = dihydroxyacetone phosphate. The protein operates within carbohydrate biosynthesis; gluconeogenesis. It functions in the pathway carbohydrate degradation; glycolysis; D-glyceraldehyde 3-phosphate from glycerone phosphate: step 1/1. In terms of biological role, involved in the gluconeogenesis. Catalyzes stereospecifically the conversion of dihydroxyacetone phosphate (DHAP) to D-glyceraldehyde-3-phosphate (G3P). The sequence is that of Triosephosphate isomerase from Clostridium botulinum (strain ATCC 19397 / Type A).